Consider the following 295-residue polypeptide: Bifunctional protein FolD (295 aa).

Residues Gly175–Ser177 and Ile243 each bind NADP(+).

Belongs to the tetrahydrofolate dehydrogenase/cyclohydrolase family. Homodimer.

It carries out the reaction (6R)-5,10-methylene-5,6,7,8-tetrahydrofolate + NADP(+) = (6R)-5,10-methenyltetrahydrofolate + NADPH. The enzyme catalyses (6R)-5,10-methenyltetrahydrofolate + H2O = (6R)-10-formyltetrahydrofolate + H(+). It participates in one-carbon metabolism; tetrahydrofolate interconversion. Catalyzes the oxidation of 5,10-methylenetetrahydrofolate to 5,10-methenyltetrahydrofolate and then the hydrolysis of 5,10-methenyltetrahydrofolate to 10-formyltetrahydrofolate. The sequence is that of Bifunctional protein FolD from Xylella fastidiosa (strain 9a5c).